The sequence spans 1451 residues: Spike glycoprotein (1451 aa).

Residues 1–31 (MIVLTLCLFLFLYSSVSCTSNNDCVQVNVTQ) form the signal peptide. Residues 32-779 (LPGNENIIKD…WTTTPNFYYY (748 aa)) form an S1 region. The Virion surface segment spans residues 32-1392 (LPGNENIIKD…NRIETYVKWP (1361 aa)). The segment at 660 to 803 (VIYEEGDNIV…IDNDIDCEPI (144 aa)) is interaction with host ANPEP. The interval 780–1451 (SIYNYTNVMN…YEPIEKVHVH (672 aa)) is S2. The segment at 1024–1045 (TGGITLGALSGGAVAIPFAVAV) is fusion peptide. The tract at residues 1039–1158 (IPFAVAVQAR…QVDRLITGRL (120 aa)) is heptad repeat 1 (HR1). Coiled-coil stretches lie at residues 1106-1150 (QDVV…DAQV) and 1340-1382 (TYLN…LEWL). Positions 1307–1404 (PDYIDINQTV…VWLLIGLVVI (98 aa)) are heptad repeat 2 (HR2). The chain crosses the membrane as a helical span at residues 1393–1412 (WYVWLLIGLVVIFCIPILLF). Residues 1413 to 1451 (CCCSTGCCGCIGCLGSCCHSICSRGQFESYEPIEKVHVH) are Intravirion-facing. The short motif at 1447–1451 (KVHVH) is the KxHxx element.

It belongs to the alphacoronaviruses spike protein family. As to quaternary structure, homotrimer. During virus morphogenesis, found in a complex with M and HE proteins. Interacts with host ANPEP.

The protein localises to the virion membrane. It localises to the host endoplasmic reticulum-Golgi intermediate compartment membrane. S1 region attaches the virion to the cell membrane by interacting with host ANPEP/aminopeptidase N, initiating the infection. Binding to the receptor probably induces conformational changes in the S glycoprotein unmasking the fusion peptide of S2 region and activating membranes fusion. S2 region belongs to the class I viral fusion protein. Under the current model, the protein has at least 3 conformational states: pre-fusion native state, pre-hairpin intermediate state, and post-fusion hairpin state. During viral and target cell membrane fusion, the coiled coil regions (heptad repeats) regions assume a trimer-of-hairpins structure, positioning the fusion peptide in close proximity to the C-terminal region of the ectodomain. The formation of this structure appears to drive apposition and subsequent fusion of viral and target cell membranes. The chain is Spike glycoprotein from Canine coronavirus (strain Insavc-1) (CCoV).